A 674-amino-acid chain; its full sequence is Glutaminase kidney isoform, mitochondrial (674 aa).

A mitochondrion-targeting transit peptide spans 1-54; sequence MMRLRGSAMLRELLLRPPAAVGGVLRRTQPLGTLCRRPRGGSRPAAGLVAAARL. The tract at residues 56 to 123 is disordered; that stretch reads PWWGGGGRAK…PGETDAFGNS (68 aa). The segment covering 58–71 has biased composition (gly residues); that stretch reads WGGGGRAKGPGSGG. The span at 89–101 shows a compositional bias: low complexity; it reads PPQQQQQQQQQPG. An N6-succinyllysine mark is found at Lys135 and Lys169. Ser291 provides a ligand contact to substrate. At Lys316 the chain carries N6-acetyllysine. A highly mobile activation loop region spans residues 320 to 327; the sequence is GLRFNKLF. Positions 340, 386, 393, 419, 471, and 489 each coordinate substrate. 2 ANK repeats span residues 590–619 and 624–653; these read DSRTALHVAAAEGHVEVVKFLLEACKVNPF and WNNTPMDEALHFGHHDVFKILQEYQVQYTP. Positions 652-674 are disordered; that stretch reads TPQGDSDDGKENQTVHKNLDGLL. At Ser657 the chain carries Phosphoserine. Residues 658–674 are compositionally biased toward basic and acidic residues; sequence DDGKENQTVHKNLDGLL.

This sequence belongs to the glutaminase family. As to quaternary structure, homotetramer, dimer of dimers. Tetramer composed of 68 and 65 kDa peptides in a 1:3 ratio. Can assemble into higher oligomers (in vitro), but the physiological significance of this is not clear. Interacts with RAF1 and MAP2K2. Interacts with ATCAY; the interaction is direct and may control GLS localization, negatively regulating its activity. In terms of processing, synthesized as a 74-kDa cytosolic precursor which is proteolytically processed by the mitochondrial-processing peptidase (MPP) via a 72-kDa intermediate to yield the mature mitochondrial 68- and 65-kDa subunits. In terms of tissue distribution, kidney, brain, and intestine.

Its subcellular location is the mitochondrion. The protein localises to the cytoplasm. The protein resides in the cytosol. It localises to the mitochondrion matrix. The catalysed reaction is L-glutamine + H2O = L-glutamate + NH4(+). Enzyme activity is increased by phosphate, due to increased kcat and increased substrate affinity. Functionally, catalyzes the first reaction in the primary pathway for the renal catabolism of glutamine. Plays a role in maintaining acid-base homeostasis. Regulates the levels of the neurotransmitter glutamate, the main excitatory neurotransmitter in the brain. The chain is Glutaminase kidney isoform, mitochondrial (Gls) from Rattus norvegicus (Rat).